The following is a 116-amino-acid chain: Large ribosomal subunit protein bL19 (116 aa).

Belongs to the bacterial ribosomal protein bL19 family.

This protein is located at the 30S-50S ribosomal subunit interface and may play a role in the structure and function of the aminoacyl-tRNA binding site. The sequence is that of Large ribosomal subunit protein bL19 from Syntrophomonas wolfei subsp. wolfei (strain DSM 2245B / Goettingen).